The primary structure comprises 101 residues: Small ribosomal subunit protein uS10 (101 aa).

It belongs to the universal ribosomal protein uS10 family. In terms of assembly, part of the 30S ribosomal subunit.

Its function is as follows. Involved in the binding of tRNA to the ribosomes. The protein is Small ribosomal subunit protein uS10 of Mycobacterium avium (strain 104).